We begin with the raw amino-acid sequence, 442 residues long: Cyclic 2,3-diphosphoglycerate synthetase (442 aa).

It belongs to the cyclic 2,3-diphosphoglycerate synthetase family.

Its subcellular location is the cytoplasm. It catalyses the reaction (2R)-2,3-bisphosphoglycerate + ATP + H(+) = cyclic (2R)-2,3-bisphosphoglycerate + ADP + phosphate. In terms of biological role, catalyzes the formation of cyclic 2,3-diphosphoglycerate (cDPG) by formation of an intramolecular phosphoanhydride bond at the expense of ATP. The chain is Cyclic 2,3-diphosphoglycerate synthetase from Rubrobacter xylanophilus (strain DSM 9941 / JCM 11954 / NBRC 16129 / PRD-1).